An 881-amino-acid polypeptide reads, in one-letter code: MVHYNFLSLIIFACFFAVFVLLVRAQDQSGFVSIDCGIPEDSSYNDETTDIKYVSDAAFVESGTIHSIDPEFQTSSLEKQFQNVRSFPEGNRNCYDVKPPQGKGFKYLIRTRFMYGNYDNLGKAPDFDLYLGFNIWDSVTIDNATTIVTKEIIHTLRSDHVHVCLVDKNRGTPFLSALEIRLLKSNTYETPYDSLILFKRWDLGGLGALPVRYKDDVFDRIWIPLRFPKYTIFNASLTIDSNNNEGFQPARFVMNTATSPEDLSQDIIFSWEPKDPTWKYFVYMHFAEVVELPSNETREFKVLLNEKEINMSSFSPRYLYTDTLFVQNPVSGPKLEFRLQQTPRSTLPPIINAIETYRVNEFLQSPTDQQDVDAIMRIKSKYGVKKSWLGDPCAPVKYPWKDINCSYVDNESPRIISVNLSSSGLTGEIDAAFSNLTLLHILDLSNNSLTGKIPDFLGNLHNLTELNLEGNKLSGAIPVKLLERSNKKLILLRIDGNPDLCVSASCQISDEKTKKNVYIIPLVASVVGVLGLVLAIALFLLYKKRHRRGGSGGVRAGPLDTTKRYYKYSEVVKVTNNFERVLGQGGFGKVYHGVLNDDQVAVKILSESSAQGYKEFRAEVELLLRVHHKNLTALIGYCHEGKKMALIYEFMANGTLGDYLSGEKSYVLSWEERLQISLDAAQGLEYLHNGCKPPIVQRDVKPANILINEKLQAKIADFGLSRSVALDGNNQDTTAVAGTIGYLDPEYHLTQKLSEKSDIYSFGVVLLEVVSGQPVIARSRTTAENIHITDRVDLMLSTGDIRGIVDPKLGERFDAGSAWKITEVAMACASSSSKNRPTMSHVVAELKESVSRARAGGGSGASSVTDPAMTNFDSGMFPQAR.

Positions 1–25 (MVHYNFLSLIIFACFFAVFVLLVRA) are cleaved as a signal peptide. At 26 to 518 (QDQSGFVSID…SDEKTKKNVY (493 aa)) the chain is on the extracellular side. N-linked (GlcNAc...) asparagine glycans are attached at residues Asn143, Asn234, Asn295, Asn310, Asn404, Asn419, Asn435, Asn446, and Asn462. LRR repeat units lie at residues 438-460 (LLHI…LGNL) and 462-483 (NLTE…KLLE). A helical transmembrane segment spans residues 519–539 (IIPLVASVVGVLGLVLAIALF). Residues 540 to 881 (LLYKKRHRRG…FDSGMFPQAR (342 aa)) are Cytoplasmic-facing. The region spanning 576-850 (NNFERVLGQG…HVVAELKESV (275 aa)) is the Protein kinase domain. ATP contacts are provided by residues 582–590 (LGQGGFGKV) and Lys603. Phosphotyrosine is present on Tyr648. Asp699 acts as the Proton acceptor in catalysis. Residues Thr734 and Thr739 each carry the phosphothreonine modification. At Tyr747 the chain carries Phosphotyrosine. A disordered region spans residues 851-881 (SRARAGGGSGASSVTDPAMTNFDSGMFPQAR).

It belongs to the protein kinase superfamily. Ser/Thr protein kinase family.

It localises to the cell membrane. The enzyme catalyses L-seryl-[protein] + ATP = O-phospho-L-seryl-[protein] + ADP + H(+). The catalysed reaction is L-threonyl-[protein] + ATP = O-phospho-L-threonyl-[protein] + ADP + H(+). The protein is Putative leucine-rich repeat receptor-like protein kinase At2g19210 of Arabidopsis thaliana (Mouse-ear cress).